Here is a 300-residue protein sequence, read N- to C-terminus: MDVLRTPDSRFEHLVGYPFAPHYVDVTAGDTQPLRMHYVDEGPGDGPPIVLLHGEPTWSYLYRTMIPPLSAAGHRVLAPDLIGFGRSDKPTRIEDYTYLRHVEWVTSWFENLDLHDVTLFVQDWGSLIGLRIAAEHGDRIARLVVANGFLPAAQGRTPLPFYVWRAFARYSPVLPAGRLVNFGTVHRVPAGVRAGYDAPFPDKTYQAGARAFPRLVPTSPDDPAVPANRAAWEALGRWDKPFLAIFGYRDPILGQADGPLIKHIPGAAGQPHARIKASHFIQEDSGTELAERMLSWQQAT.

An AB hydrolase-1 domain is found at 47-176; that stretch reads PPIVLLHGEP…FARYSPVLPA (130 aa). Catalysis depends on Asp-123, which acts as the Nucleophile. Catalysis depends on Asp-250, which acts as the Proton donor. The active-site Proton acceptor is His-279.

Belongs to the haloalkane dehalogenase family. Type 1 subfamily. Monomer.

It carries out the reaction 1-haloalkane + H2O = a halide anion + a primary alcohol + H(+). Catalyzes hydrolytic cleavage of carbon-halogen bonds in halogenated aliphatic compounds, leading to the formation of the corresponding primary alcohols, halide ions and protons. This is Haloalkane dehalogenase 1 (dhmA1) from Mycobacterium bovis (strain ATCC BAA-935 / AF2122/97).